Here is a 635-residue protein sequence, read N- to C-terminus: Threonine--tRNA ligase (635 aa).

Residues 1–144 (MQLLLIHSDY…RSIRPEGTQR (144 aa)) form an editing domain region. A catalytic region spans residues 215–514 (PHVELMRRLE…TEEGKVPMLP (300 aa)). Zn(2+) contacts are provided by C307, H359, and H483.

This sequence belongs to the class-II aminoacyl-tRNA synthetase family. As to quaternary structure, homodimer. Zn(2+) serves as cofactor.

The protein resides in the cytoplasm. It carries out the reaction tRNA(Thr) + L-threonine + ATP = L-threonyl-tRNA(Thr) + AMP + diphosphate + H(+). Its function is as follows. Catalyzes the attachment of threonine to tRNA(Thr) in a two-step reaction: L-threonine is first activated by ATP to form Thr-AMP and then transferred to the acceptor end of tRNA(Thr). Also edits incorrectly charged L-seryl-tRNA(Thr). The sequence is that of Threonine--tRNA ligase from Methanosarcina barkeri (strain Fusaro / DSM 804).